Reading from the N-terminus, the 103-residue chain is Small integral membrane protein 32 (103 aa).

Residues 55–75 form a helical membrane-spanning segment; the sequence is YLLLFFLLLLSVALVVLFIGC.

It localises to the membrane. This chain is Small integral membrane protein 32, found in Homo sapiens (Human).